Reading from the N-terminus, the 111-residue chain is Large ribosomal subunit protein uL22 (111 aa).

The protein belongs to the universal ribosomal protein uL22 family. Part of the 50S ribosomal subunit.

Its function is as follows. This protein binds specifically to 23S rRNA; its binding is stimulated by other ribosomal proteins, e.g. L4, L17, and L20. It is important during the early stages of 50S assembly. It makes multiple contacts with different domains of the 23S rRNA in the assembled 50S subunit and ribosome. The globular domain of the protein is located near the polypeptide exit tunnel on the outside of the subunit, while an extended beta-hairpin is found that lines the wall of the exit tunnel in the center of the 70S ribosome. The sequence is that of Large ribosomal subunit protein uL22 from Geobacter sulfurreducens (strain ATCC 51573 / DSM 12127 / PCA).